Reading from the N-terminus, the 511-residue chain is Glucans biosynthesis protein G (511 aa).

The signal sequence occupies residues 1–22 (MMKMRWLGAAIMLTLYASSSWA).

This sequence belongs to the OpgD/OpgG family.

Its subcellular location is the periplasm. It functions in the pathway glycan metabolism; osmoregulated periplasmic glucan (OPG) biosynthesis. Its function is as follows. Involved in the biosynthesis of osmoregulated periplasmic glucans (OPGs). This chain is Glucans biosynthesis protein G, found in Salmonella enteritidis PT4 (strain P125109).